Reading from the N-terminus, the 825-residue chain is AMP deaminase 2 (825 aa).

The disordered stretch occupies residues 1–49; it reads MASYPSGSGKPKAKYPFKKRASLQASTAAPEARGGLGAPPLQSARSLPG. Residues 11–21 show a composition bias toward basic residues; that stretch reads PKAKYPFKKRA. S22 bears the Phosphoserine mark. R45 is subject to Omega-N-methylarginine. A phosphoserine mark is found at S46, S64, and S80. Phosphotyrosine is present on Y91. Phosphoserine occurs at positions 97 and 114. At T134 the chain carries Phosphothreonine. Phosphoserine is present on residues S136 and S138. 2 residues coordinate Zn(2+): H364 and H366. Residues H366 and 435–440 each bind substrate; that span reads KFNAKY. Position 633 (H633) interacts with Zn(2+). E636 serves as a coordination point for substrate. H655 acts as the Proton acceptor in catalysis. Zn(2+) is bound at residue D710. 711–714 contributes to the substrate binding site; that stretch reads DPLQ.

Belongs to the metallo-dependent hydrolases superfamily. Adenosine and AMP deaminases family. Homotetramer. It depends on Zn(2+) as a cofactor. Highly expressed in cerebellum.

The enzyme catalyses AMP + H2O + H(+) = IMP + NH4(+). The protein operates within purine metabolism; IMP biosynthesis via salvage pathway; IMP from AMP: step 1/1. AMP deaminase plays a critical role in energy metabolism. Catalyzes the deamination of AMP to IMP and plays an important role in the purine nucleotide cycle. This is AMP deaminase 2 from Homo sapiens (Human).